A 115-amino-acid polypeptide reads, in one-letter code: Viral Lymphotactin (115 aa).

An N-terminal signal peptide occupies residues 1-19; the sequence is MRLLTILALCCVAIWVVES. Cys30 and Cys67 are joined by a disulfide.

The protein belongs to the intercrine gamma family. In terms of assembly, interacts with host XCR1. In terms of processing, N-glycosylated and O-glycosylated.

The protein resides in the secreted. Chemoattractant for CD4-dendritic cells, but not for CD4+ dendritic cells, T-cells or B-cells. This Rat cytomegalovirus (isolate England) (RCMV-E) protein is Viral Lymphotactin (vXCL1).